Reading from the N-terminus, the 158-residue chain is Replication and maintenance protein (158 aa).

The chain is Replication and maintenance protein (repL) from Staphylococcus aureus.